The chain runs to 128 residues: Small ribosomal subunit protein uS11 (128 aa).

This sequence belongs to the universal ribosomal protein uS11 family. Part of the 30S ribosomal subunit. Interacts with proteins S7 and S18. Binds to IF-3.

In terms of biological role, located on the platform of the 30S subunit, it bridges several disparate RNA helices of the 16S rRNA. Forms part of the Shine-Dalgarno cleft in the 70S ribosome. The polypeptide is Small ribosomal subunit protein uS11 (Phytoplasma australiense).